Here is a 423-residue protein sequence, read N- to C-terminus: Glutaminase (423 aa).

The tract at residues 27 to 312 is glutaminase; that stretch reads GEVAQYIPQL…LSEDMGLHLM (286 aa). Substrate contacts are provided by serine 69, asparagine 119, glutamate 165, asparagine 172, tyrosine 196, tyrosine 248, and valine 266. In terms of domain architecture, STAS spans 321–423; the sequence is AVRAIEERGD…SPQVDDPEEL (103 aa).

The protein belongs to the glutaminase family. In terms of assembly, homotetramer.

It carries out the reaction L-glutamine + H2O = L-glutamate + NH4(+). This is Glutaminase (glsA) from Corynebacterium efficiens (strain DSM 44549 / YS-314 / AJ 12310 / JCM 11189 / NBRC 100395).